The sequence spans 384 residues: Glucans biosynthesis protein C (384 aa).

Transmembrane regions (helical) follow at residues Ala-17 to Trp-37, Phe-54 to Leu-74, Val-91 to Gln-111, Leu-140 to Phe-160, Ala-173 to Ile-193, Phe-212 to Ile-232, Phe-240 to Leu-260, Thr-274 to Gly-294, Ala-311 to Thr-331, and Leu-338 to Ile-358.

It belongs to the acyltransferase 3 family. OpgC subfamily.

It localises to the cell membrane. It participates in glycan metabolism; osmoregulated periplasmic glucan (OPG) biosynthesis. In terms of biological role, necessary for the succinyl substitution of periplasmic glucans. Could catalyze the transfer of succinyl residues from the cytoplasmic side of the membrane to the nascent glucan backbones on the periplasmic side of the membrane. The chain is Glucans biosynthesis protein C from Salmonella typhi.